A 503-amino-acid polypeptide reads, in one-letter code: MLDLTYETPKPKVIAGAKHDWELVIGMEIHAQVSSNAKLFSGASTTFGAEPNSNVSFVDCAMPGMLPVINDFCVAQAVRTGLGLKAQINLVSAFDRKNYFYPDLPQGYQISQLYHPIVGEGEVLVEMGPGVARLVRIERIHLEQDAGKSIHDMDPNLSFVDFNRTGVALMEIVSRPDIRGPEEAAAYVAKLRQILRYLGTCDGNMQNGNLRADVNVSVCRPGDYERYQATQDFSHLGTRCEIKNMNSMRFIQQAIEYEARRQIAILEDGGKVVQETRLYDPDKGETRSMRSKEEAHDYRYFPDPDLLPLEIEQAWVDEIATSMPELPDAKKARFMADYGVTDYDANVLTAELDAAAFFEAVAKGRDGKQAANWVINELFGRLNKQGLTIAEAPVSAAQLGGVLDLIASGEISGKMAKDLFEILWTEGGDPAEVAAARGMKQVTDTGAIETAVDEIIAANPAQVEKAKANPKLAGWFVGQVIKATGGKANPAAVNQIVAQKLGL.

It belongs to the GatB/GatE family. GatB subfamily. In terms of assembly, heterotrimer of A, B and C subunits.

It carries out the reaction L-glutamyl-tRNA(Gln) + L-glutamine + ATP + H2O = L-glutaminyl-tRNA(Gln) + L-glutamate + ADP + phosphate + H(+). The enzyme catalyses L-aspartyl-tRNA(Asn) + L-glutamine + ATP + H2O = L-asparaginyl-tRNA(Asn) + L-glutamate + ADP + phosphate + 2 H(+). Functionally, allows the formation of correctly charged Asn-tRNA(Asn) or Gln-tRNA(Gln) through the transamidation of misacylated Asp-tRNA(Asn) or Glu-tRNA(Gln) in organisms which lack either or both of asparaginyl-tRNA or glutaminyl-tRNA synthetases. The reaction takes place in the presence of glutamine and ATP through an activated phospho-Asp-tRNA(Asn) or phospho-Glu-tRNA(Gln). In Cereibacter sphaeroides (strain ATCC 17025 / ATH 2.4.3) (Rhodobacter sphaeroides), this protein is Aspartyl/glutamyl-tRNA(Asn/Gln) amidotransferase subunit B.